A 404-amino-acid chain; its full sequence is Adenylosuccinate synthetase (404 aa).

Residues 12 to 18 (GDEGKGK) and 40 to 42 (GHT) contribute to the GTP site. Asp-13 functions as the Proton acceptor in the catalytic mechanism. Asp-13 and Gly-40 together coordinate Mg(2+). Residues 13–16 (DEGK), 38–41 (NAGH), Thr-121, Arg-135, Gln-213, Thr-228, and Arg-296 contribute to the IMP site. Catalysis depends on His-41, which acts as the Proton donor. Residue 292–298 (TTTGRAR) participates in substrate binding. GTP contacts are provided by residues Arg-298, 324–326 (KMD), and 389–391 (SCG).

The protein belongs to the adenylosuccinate synthetase family. In terms of assembly, homodimer. Mg(2+) serves as cofactor.

The protein localises to the cytoplasm. It carries out the reaction IMP + L-aspartate + GTP = N(6)-(1,2-dicarboxyethyl)-AMP + GDP + phosphate + 2 H(+). The protein operates within purine metabolism; AMP biosynthesis via de novo pathway; AMP from IMP: step 1/2. Its function is as follows. Plays an important role in the de novo pathway of purine nucleotide biosynthesis. Catalyzes the first committed step in the biosynthesis of AMP from IMP. This Deinococcus geothermalis (strain DSM 11300 / CIP 105573 / AG-3a) protein is Adenylosuccinate synthetase.